The primary structure comprises 195 residues: Probable GTP-binding protein EngB (195 aa).

One can recognise an EngB-type G domain in the interval Gly24–Leu195. GTP-binding positions include Gly32–Ser39, Gly59–Thr63, Asp77–Gly80, Thr144–Asp147, and Tyr176–Ser178. Mg(2+)-binding residues include Ser39 and Thr61.

It belongs to the TRAFAC class TrmE-Era-EngA-EngB-Septin-like GTPase superfamily. EngB GTPase family. It depends on Mg(2+) as a cofactor.

Its function is as follows. Necessary for normal cell division and for the maintenance of normal septation. The chain is Probable GTP-binding protein EngB from Staphylococcus haemolyticus (strain JCSC1435).